The primary structure comprises 233 residues: Small heat shock protein hspF (233 aa).

The sHSP domain maps to 129 to 233; sequence IPLFTFFEPL…ILLITVNKFL (105 aa).

This sequence belongs to the small heat shock protein (HSP20) family.

The sequence is that of Small heat shock protein hspF (hspF-1) from Dictyostelium discoideum (Social amoeba).